The following is a 574-amino-acid chain: Septation ring formation regulator EzrA (574 aa).

The Extracellular segment spans residues 1–7 (MSSGIIL). A helical transmembrane segment spans residues 8–26 (LIVAIVLLVIIAYLVGVII). Topologically, residues 27-574 (RKRNDSLITS…YEKTREHIRF (548 aa)) are cytoplasmic. Coiled coils occupy residues 102–141 (NFIRAKHEINSVESQLNLVEEDIASIREALNILKEQEEKN), 274–350 (ELVT…ETES), and 459–520 (QLEA…SFEA).

Belongs to the EzrA family.

The protein resides in the cell membrane. In terms of biological role, negative regulator of FtsZ ring formation; modulates the frequency and position of FtsZ ring formation. Inhibits FtsZ ring formation at polar sites. Interacts either with FtsZ or with one of its binding partners to promote depolymerization. In Streptococcus pyogenes serotype M1, this protein is Septation ring formation regulator EzrA.